Here is a 185-residue protein sequence, read N- to C-terminus: Peptide deformylase (185 aa).

Residues C94 and H136 each coordinate Fe cation. E137 is a catalytic residue. H140 contributes to the Fe cation binding site.

It belongs to the polypeptide deformylase family. Requires Fe(2+) as cofactor.

It carries out the reaction N-terminal N-formyl-L-methionyl-[peptide] + H2O = N-terminal L-methionyl-[peptide] + formate. In terms of biological role, removes the formyl group from the N-terminal Met of newly synthesized proteins. Requires at least a dipeptide for an efficient rate of reaction. N-terminal L-methionine is a prerequisite for activity but the enzyme has broad specificity at other positions. This Chlorobium phaeobacteroides (strain BS1) protein is Peptide deformylase.